The chain runs to 333 residues: MPLGLGRRKKAPPLVENEEAEPSRSGLGVGEPGPLGGSAAGESQMGLPPPPAALRPRLVFHTQLAHGSPTGRIEGFTNVKELYGKIAEAFRLPAAEVMFCTLNTHKVDMDKLLGGQIGLEDFIFAHVKGQRKEVEVFKSEEALGLTITDNGAGYAFIKRIKEGSVIDHIQLISVGDMIEAINGQSLLGCRHYEVARLLKELPRGRTFTLKLTEPRKAFDMISQRSAGGHPGSGPQLGTGRGTLRLRSRGPATVEDLPSAFEEKAIEKVDDLLESYMGIRDTELAATMVELGKDKRNPDELAEALDERLGDFAFPDEFVFDVWGAIGDAKVGRY.

Residues 1–11 are compositionally biased toward basic residues; the sequence is MPLGLGRRKKA. Residues 1–53 are disordered; that stretch reads MPLGLGRRKKAPPLVENEEAEPSRSGLGVGEPGPLGGSAAGESQMGLPPPPAA. The segment covering 27-39 has biased composition (gly residues); that stretch reads LGVGEPGPLGGSA. Residue Ser-68 is modified to Phosphoserine. The PDZ domain occupies 133–213; that stretch reads EVEVFKSEEA…GRTFTLKLTE (81 aa). Phosphoserine occurs at positions 222, 225, and 232. The interval 223 to 244 is disordered; that stretch reads QRSAGGHPGSGPQLGTGRGTLR. Residues 228-240 are compositionally biased toward gly residues; sequence GHPGSGPQLGTGR. Thr-242 is modified (phosphothreonine). Residue Ser-247 is modified to Phosphoserine.

The protein belongs to the GIPC family. Interacts with GLUT1 (C-terminus), ACTN1, KIF1B, MYO6 and PLEKHG5. Interacts with RGS19 C-terminus. Interacts with SDC4/syndecan-4 and SEMA4C/semaphorin-4C. Widely expressed.

The protein resides in the cytoplasm. The protein localises to the membrane. Its function is as follows. Inhibits endothelial cell migration (in vitro). May be involved in G protein-linked signaling. The protein is PDZ domain-containing protein GIPC1 (Gipc1) of Mus musculus (Mouse).